The chain runs to 703 residues: Zinc finger protein 750 (703 aa).

A CCHC-type zinc finger spans residues 25-51 (YKCFQCPFTCNEKSHLFNHMKYGLCKN). C27, C30, H43, and C49 together coordinate Zn(2+). Disordered stretches follow at residues 64–113 (KCPK…DAKE), 350–527 (PASS…YGPM), 553–614 (WAPR…KQTA), and 630–703 (RVAD…TRVS). Residues 67 to 106 (KSSSLDPKQTHQPEPTSKPATSKSLLNGLSSFDPKSQQGS) are compositionally biased toward polar residues. Low complexity predominate over residues 352 to 361 (SSPSELNLSS). The span at 367–394 (TECEKGSPVPEAKDPSKDGQRDAEEAKM) shows a compositional bias: basic and acidic residues. 2 stretches are compositionally biased toward polar residues: residues 410–421 (SPTNFTQTSQTF) and 456–477 (GSES…SLQA). The span at 574-611 (TETKGSEDRTSRVETPQDKAHSRTTPDVHTEDSSDEQK) shows a compositional bias: basic and acidic residues. Residues 639-655 (QEPTRQDVPTLSATENL) are compositionally biased toward polar residues.

Its subcellular location is the nucleus. Functionally, transcription factor involved in epidermis differentiation. Required for terminal epidermal differentiation: acts downstream of p63/TP63 and activates expression of late epidermal differentiation genes. Specifically binds to the promoter of KLF4 and promotes its expression. The sequence is that of Zinc finger protein 750 (Znf750) from Mus musculus (Mouse).